A 231-amino-acid chain; its full sequence is ATP phosphoribosyltransferase (231 aa).

It belongs to the ATP phosphoribosyltransferase family. Short subfamily. As to quaternary structure, heteromultimer composed of HisG and HisZ subunits.

The protein localises to the cytoplasm. The catalysed reaction is 1-(5-phospho-beta-D-ribosyl)-ATP + diphosphate = 5-phospho-alpha-D-ribose 1-diphosphate + ATP. The protein operates within amino-acid biosynthesis; L-histidine biosynthesis; L-histidine from 5-phospho-alpha-D-ribose 1-diphosphate: step 1/9. In terms of biological role, catalyzes the condensation of ATP and 5-phosphoribose 1-diphosphate to form N'-(5'-phosphoribosyl)-ATP (PR-ATP). Has a crucial role in the pathway because the rate of histidine biosynthesis seems to be controlled primarily by regulation of HisG enzymatic activity. The polypeptide is ATP phosphoribosyltransferase (hisG) (Rhizobium meliloti (strain 1021) (Ensifer meliloti)).